The following is a 569-amino-acid chain: Atlastin-2 (569 aa).

The segment at 1–49 (MAEGGSLRNRTRFGSRSNEAMNHVDYPDENFVEEIQLNSDTEVMEKPRP) is N-terminal hypervariable region (HVR). Topologically, residues 1-464 (MAEGGSLRNR…NIFYAARTPA (464 aa)) are cytoplasmic. The GB1/RHD3-type G domain maps to 80 to 324 (DLNVVVLSVA…LVPLLLAPEN (245 aa)). Residues Arg93, Lys94, Gly95, Lys96, Ser97, Phe98, Gln163, Arg232, and Asp233 each coordinate GDP. GTP is bound by residues Arg93, Lys94, Gly95, Lys96, Ser97, and Phe98. A Mg(2+)-binding site is contributed by Ser97. Residues Arg232 and Asp233 each contribute to the GTP site. Residues 244–272 (LEGGNKFLEKRLQVKQNQHEELQNVRKHI) are a coiled coil. Positions 291 and 294 each coordinate GDP. Val291 serves as a coordination point for GTP. The tract at residues 362 to 453 (MLQATAEANN…YANFLKHNDG (92 aa)) is 3HB (three-helix bundle) domain. Residues 454-462 (KNIFYAART) form a linker region. The helical transmembrane segment at 465-485 (TLFAVMFAMYIISGLTGFIGM) threads the bilayer. Over 486 to 487 (NS) the chain is Lumenal. Residues 488 to 508 (IATICNLIMGLTLLSFCTWAY) form a helical membrane-spanning segment. Over 509 to 569 (VKYSGEFREL…DQVSGRLKTN (61 aa)) the chain is Cytoplasmic. The autoinhibitory domain stretch occupies residues 535–569 (KPLSDNLMEDNIRQTVRNSIKAGLTDQVSGRLKTN).

It belongs to the TRAFAC class dynamin-like GTPase superfamily. GB1/RHD3 GTPase family. GB1 subfamily. As to quaternary structure, monomeric and homodimeric. The homodimer, transiently formed by two molecules on opposing membranes, is the active form mediating ER membrane fusion.

The protein resides in the endoplasmic reticulum membrane. It catalyses the reaction GTP + H2O = GDP + phosphate + H(+). Its function is as follows. Atlastin-2 (ATL2) is a membrane-anchored GTPase that mediates the GTP-dependent fusion of endoplasmic reticulum (ER) membranes, maintaining the continuous ER network. It facilitates the formation of three-way junctions where ER tubules intersect. Two atlastin-2 on neighboring ER tubules bind GTP and form loose homodimers through the GB1/RHD3-type G domains and 3HB regions. Upon GTP hydrolysis, the 3HB regions tighten, pulling the membranes together to drive their fusion. After fusion, the homodimer disassembles upon release of inorganic phosphate (Pi). Subsequently, GDP dissociates, resetting the monomers to a conformation ready for a new fusion cycle. In Xenopus laevis (African clawed frog), this protein is Atlastin-2 (atl2).